We begin with the raw amino-acid sequence, 449 residues long: tRNA-2-methylthio-N(6)-dimethylallyladenosine synthase (449 aa).

The region spanning 3 to 124 (KMLYIKTYGC…LPTMLEKLDS (122 aa)) is the MTTase N-terminal domain. [4Fe-4S] cluster is bound by residues Cys12, Cys48, Cys87, Cys163, Cys167, and Cys170. The Radical SAM core domain occupies 149-380 (KSPTVSGLVS…QAQLMLQQLE (232 aa)). The TRAM domain maps to 383–447 (QKLIGKVVPV…ASSLFGEVCP (65 aa)).

Belongs to the methylthiotransferase family. MiaB subfamily. In terms of assembly, monomer. The cofactor is [4Fe-4S] cluster.

It is found in the cytoplasm. It carries out the reaction N(6)-dimethylallyladenosine(37) in tRNA + (sulfur carrier)-SH + AH2 + 2 S-adenosyl-L-methionine = 2-methylsulfanyl-N(6)-dimethylallyladenosine(37) in tRNA + (sulfur carrier)-H + 5'-deoxyadenosine + L-methionine + A + S-adenosyl-L-homocysteine + 2 H(+). In terms of biological role, catalyzes the methylthiolation of N6-(dimethylallyl)adenosine (i(6)A), leading to the formation of 2-methylthio-N6-(dimethylallyl)adenosine (ms(2)i(6)A) at position 37 in tRNAs that read codons beginning with uridine. This is tRNA-2-methylthio-N(6)-dimethylallyladenosine synthase from Orientia tsutsugamushi (strain Boryong) (Rickettsia tsutsugamushi).